Reading from the N-terminus, the 277-residue chain is MEMO1 family protein MTH_45 (277 aa).

This sequence belongs to the MEMO1 family.

In Methanothermobacter thermautotrophicus (strain ATCC 29096 / DSM 1053 / JCM 10044 / NBRC 100330 / Delta H) (Methanobacterium thermoautotrophicum), this protein is MEMO1 family protein MTH_45.